A 478-amino-acid polypeptide reads, in one-letter code: Cysteine protease ATG4B (478 aa).

The span at 1–15 shows a compositional bias: polar residues; sequence MTSLPDRGVSSSSSD. Residues 1–31 form a disordered region; it reads MTSLPDRGVSSSSSDPLCEGNIAPCSSSSEQ. Residue cysteine 164 is the Nucleophile of the active site. Catalysis depends on residues aspartate 361 and histidine 363.

This sequence belongs to the peptidase C54 family. Interacts with ATG8.

It localises to the cytoplasm. The catalysed reaction is [protein]-C-terminal L-amino acid-glycyl-phosphatidylethanolamide + H2O = [protein]-C-terminal L-amino acid-glycine + a 1,2-diacyl-sn-glycero-3-phosphoethanolamine. Cysteine protease that plays a key role in autophagy by mediating both proteolytic activation and delipidation of ATG8 family proteins. The protease activity is required for proteolytic activation of ATG8 family proteins: cleaves the C-terminal amino acid of ATG8 proteins to reveal a C-terminal glycine. Exposure of the glycine at the C-terminus is essential for ATG8 proteins conjugation to phosphatidylethanolamine (PE) and insertion to membranes, which is necessary for autophagy. In addition to the protease activity, also mediates delipidation of PE-conjugated ATG8 proteins. This is Cysteine protease ATG4B (ATG4B) from Oryza sativa subsp. japonica (Rice).